The sequence spans 1478 residues: MVLEQDLDPFVGGNWMNSAYKGFTFLSATWLAPNIYLLISGCLQYFYEVRKRSHYFHFRRFWTIWLKSLVIMVLLFTHIYDCYKTNESVWNVLSIITYFLALFLHVVEQPTLRIPMASLLMFWLFKFLASALVLLLRPNYTMFPMLNVVPSITFFCSLVCLLAEIYVPPANRVWYPDDAAELEETGLRPSRFTYANIFSRISFGWLSPLMKFGYRNYLTESDAWSLPPAERSSNLTIVFEKNWISHAKKKKSSLYMWGVLFLNHWKLTVVIIVLKLVQDVVAFIQPNLIRKIVIFVSSYSSEHPQPPQVGFSLAIAMFLTNVVQTALLQQYFQLGMVLGMRWRSELITAIYRKSLRLSSAARQSRSVGDIVNYMSVDTQKVCDLTMFLFVIVSGPFQIVLALTNLYHLVGYGALSGAFVTFLLFPCNVVIASIFKRFQNRQMKNKDARSQFMTEIINNIRSIKLYAWENIFLQKLLQLRNTRELRMLKKIGIVNTIGNFTWLFAPILVSAATFGTFIVLYGKTRVLSVDIVFACLSLFNLLQFPLTMLPIVVSSVLEASVAISRIYGFLTAGELDSNAVQRYPANKEPSGVCLEIKKGTFSWSGPGQNAAEPTLRDIDFVARRGELCCIVGKVGMGKSSLLEACLGNMQKHSGSVFRCGSIAYAAQQPWILNATIQENILFGLELDPEFYEKTIRACCLLRDFEILADGDQTEVGEKGISLSGGQKARISLARAVYSRSDIYLLDDILSAVDQHVNRDLVRNLLGSKGLLRSRCVILSTNSLTVLKEASMIYMLRNGKIIESGSFTQLSSSPDSQLFQLLSEFSKKDTASSTGADTPLSRSQSVITSSTDVTSSASRSSDTVSNYPKATIKGTGRIRKRLTDEDNVKATGQAAEKMERGKVKWKVYWTYFKACSLFLIFLYFLFIIGGIGMNVGTNVWLKHWSEVNTQLGYNPKPYFYLGIYTLFGLLSCALISLSSLTITVFCAIKSCRYLHDSMVKAVLRAPMSFFETTPTGRILNRFSSDVYRVDEVISRVFMFFFRNLFQIVFVLAVICYSSPMFMILIVPLFFLYRYNQVYYTQTSRELKRLDSVTRSPLYAHFQESLGGLSTIRAYDMEDTFISENDIRVDTNHRIWFLYFSSNRWQAIRVEAIGALVVFSSAFFGVLSAVRGNPNSGLVGLSLSYAVQITQSLTFVVRQSVDVETNIVSVERMLEYIGLPSEAPSIIPDHRPPEGWPSHGAIKFDHYSVRYRENLPLVLNDISVNIKPQEKIGIVGRTGAGKSTLTLALFRLIEPTSGDIQLDDINITSIGLHDLRSRLAIIPQENQAFEGTIRENLDPNANATDEEIWHALEAASLKQFIQTLDGGLYSRVTEGGANLSSGQRQLMCLTRALLTPTRVLLLDEATAAVDVETDAIVQRTIRERFNDRTILTIAHRINTVMDSNRILVLDHGKVVEFDSTKKLLENKASLFYSLAKESGLI.

The Vacuolar portion of the chain corresponds to 1-25; that stretch reads MVLEQDLDPFVGGNWMNSAYKGFTF. The helical transmembrane segment at 26 to 46 threads the bilayer; that stretch reads LSATWLAPNIYLLISGCLQYF. Residues 47 to 65 lie on the Cytoplasmic side of the membrane; the sequence is YEVRKRSHYFHFRRFWTIW. The chain crosses the membrane as a helical span at residues 66-85; the sequence is LKSLVIMVLLFTHIYDCYKT. N-linked (GlcNAc...) asparagine glycosylation is present at Asn-86. At 86–90 the chain is on the vacuolar side; the sequence is NESVW. The chain crosses the membrane as a helical span at residues 91 to 104; that stretch reads NVLSIITYFLALFL. The Cytoplasmic portion of the chain corresponds to 105–116; that stretch reads HVVEQPTLRIPM. A helical transmembrane segment spans residues 117-137; that stretch reads ASLLMFWLFKFLASALVLLLR. Over 138 to 154 the chain is Vacuolar; the sequence is PNYTMFPMLNVVPSITF. A glycan (N-linked (GlcNAc...) asparagine) is linked at Asn-139. Residues 155–175 traverse the membrane as a helical segment; sequence FCSLVCLLAEIYVPPANRVWY. Residues 176–259 lie on the Cytoplasmic side of the membrane; the sequence is PDDAAELEET…KKSSLYMWGV (84 aa). A helical transmembrane segment spans residues 260 to 280; it reads LFLNHWKLTVVIIVLKLVQDV. The ABC transmembrane type-1 1 domain occupies 268-557; the sequence is TVVIIVLKLV…LPIVVSSVLE (290 aa). The Vacuolar portion of the chain corresponds to 281-310; that stretch reads VAFIQPNLIRKIVIFVSSYSSEHPQPPQVG. The helical transmembrane segment at 311-331 threads the bilayer; sequence FSLAIAMFLTNVVQTALLQQY. At 332–387 the chain is on the cytoplasmic side; the sequence is FQLGMVLGMRWRSELITAIYRKSLRLSSAARQSRSVGDIVNYMSVDTQKVCDLTMF. A helical transmembrane segment spans residues 388-408; the sequence is LFVIVSGPFQIVLALTNLYHL. Topologically, residues 409–411 are vacuolar; that stretch reads VGY. The helical transmembrane segment at 412–432 threads the bilayer; sequence GALSGAFVTFLLFPCNVVIAS. The Cytoplasmic segment spans residues 433-495; sequence IFKRFQNRQM…MLKKIGIVNT (63 aa). Residues 496-516 form a helical membrane-spanning segment; sequence IGNFTWLFAPILVSAATFGTF. Residues 517–539 are Vacuolar-facing; it reads IVLYGKTRVLSVDIVFACLSLFN. Residues 540 to 560 form a helical membrane-spanning segment; sequence LLQFPLTMLPIVVSSVLEASV. Residues 561–910 lie on the Cytoplasmic side of the membrane; that stretch reads AISRIYGFLT…VKWKVYWTYF (350 aa). Residues 593–821 form the ABC transporter 1 domain; the sequence is LEIKKGTFSW…PDSQLFQLLS (229 aa). 631–638 provides a ligand contact to ATP; sequence GKVGMGKS. The tract at residues 828–867 is disordered; that stretch reads TASSTGADTPLSRSQSVITSSTDVTSSASRSSDTVSNYPK. Polar residues predominate over residues 829–840; the sequence is ASSTGADTPLSR. A phosphoserine mark is found at Ser-839, Ser-843, and Ser-863. Low complexity predominate over residues 841 to 863; sequence SQSVITSSTDVTSSASRSSDTVS. Residues 911–931 traverse the membrane as a helical segment; the sequence is KACSLFLIFLYFLFIIGGIGM. The 285-residue stretch at 918-1202 folds into the ABC transmembrane type-1 2 domain; the sequence is IFLYFLFIIG…VVRQSVDVET (285 aa). At 932–968 the chain is on the vacuolar side; that stretch reads NVGTNVWLKHWSEVNTQLGYNPKPYFYLGIYTLFGLL. Residues 969 to 990 traverse the membrane as a helical segment; it reads SCALISLSSLTITVFCAIKSCR. The Cytoplasmic portion of the chain corresponds to 991–1033; it reads YLHDSMVKAVLRAPMSFFETTPTGRILNRFSSDVYRVDEVISR. A helical membrane pass occupies residues 1034–1054; that stretch reads VFMFFFRNLFQIVFVLAVICY. Ser-1055 is a topological domain (vacuolar). Residues 1056–1076 traverse the membrane as a helical segment; the sequence is SPMFMILIVPLFFLYRYNQVY. Residues 1077–1147 lie on the Cytoplasmic side of the membrane; that stretch reads YTQTSRELKR…SSNRWQAIRV (71 aa). A helical transmembrane segment spans residues 1148 to 1168; the sequence is EAIGALVVFSSAFFGVLSAVR. Residues 1169-1172 are Vacuolar-facing; that stretch reads GNPN. Residues 1173-1193 traverse the membrane as a helical segment; the sequence is SGLVGLSLSYAVQITQSLTFV. The Cytoplasmic segment spans residues 1194-1478; the sequence is VRQSVDVETN…YSLAKESGLI (285 aa). In terms of domain architecture, ABC transporter 2 spans 1239–1473; it reads IKFDHYSVRY…KASLFYSLAK (235 aa). 1273 to 1280 lines the ATP pocket; sequence GRTGAGKS.

The protein belongs to the ABC transporter superfamily. ABCC family. Conjugate transporter (TC 3.A.1.208) subfamily.

Its subcellular location is the vacuole membrane. In terms of biological role, involved in vacuolar sequestration of glutathione S-conjugates. Together with abc4, required for accumulation of a red pigment (ade pigment) in the vacuole of a mutant affected in the adenine biosynthetic pathway. The sequence is that of ATP-binding cassette transporter abc2 (abc2) from Schizosaccharomyces pombe (strain 972 / ATCC 24843) (Fission yeast).